The primary structure comprises 189 residues: Group XIIA secretory phospholipase A2 (189 aa).

The first 22 residues, 1-22 (MALLSRPALTLLLLLMAAVVRC), serve as a signal peptide directing secretion. Ca(2+) contacts are provided by Gly88, Pro90, and Phe92. His110 is a catalytic residue. Asp111 is a binding site for Ca(2+). Asp125 is an active-site residue.

Ca(2+) serves as cofactor. Abundantly expressed in heart, skeletal muscle, kidney, liver and pancreas.

Its subcellular location is the secreted. The protein localises to the cytoplasm. The enzyme catalyses a 1,2-diacyl-sn-glycero-3-phosphocholine + H2O = a 1-acyl-sn-glycero-3-phosphocholine + a fatty acid + H(+). Its function is as follows. PA2 catalyzes the calcium-dependent hydrolysis of the 2-acyl groups in 3-sn-phosphoglycerides. Does not exhibit detectable activity toward sn-2-arachidonoyl- or linoleoyl-phosphatidylcholine or -phosphatidylethanolamine. The protein is Group XIIA secretory phospholipase A2 (PLA2G12A) of Homo sapiens (Human).